The primary structure comprises 441 residues: Methylenetetrahydrofolate--tRNA-(uracil-5-)-methyltransferase TrmFO (441 aa).

FAD is bound at residue 7–12 (GAGLSG).

This sequence belongs to the MnmG family. TrmFO subfamily. Requires FAD as cofactor.

Its subcellular location is the cytoplasm. The catalysed reaction is uridine(54) in tRNA + (6R)-5,10-methylene-5,6,7,8-tetrahydrofolate + NADH + H(+) = 5-methyluridine(54) in tRNA + (6S)-5,6,7,8-tetrahydrofolate + NAD(+). It carries out the reaction uridine(54) in tRNA + (6R)-5,10-methylene-5,6,7,8-tetrahydrofolate + NADPH + H(+) = 5-methyluridine(54) in tRNA + (6S)-5,6,7,8-tetrahydrofolate + NADP(+). In terms of biological role, catalyzes the folate-dependent formation of 5-methyl-uridine at position 54 (M-5-U54) in all tRNAs. The protein is Methylenetetrahydrofolate--tRNA-(uracil-5-)-methyltransferase TrmFO of Pseudothermotoga lettingae (strain ATCC BAA-301 / DSM 14385 / NBRC 107922 / TMO) (Thermotoga lettingae).